The following is a 172-amino-acid chain: Counting factor-associated protein B (172 aa).

An N-terminal signal peptide occupies residues 1-21 (MKLLNSLILLVLTCLVSSINT). 2 N-linked (GlcNAc...) asparagine glycosylation sites follow: Asn37 and Asn153.

It is found in the secreted. This chain is Counting factor-associated protein B (cfaB), found in Dictyostelium discoideum (Social amoeba).